The chain runs to 208 residues: Large ribosomal subunit protein uL3 (208 aa).

N5-methylglutamine is present on glutamine 149.

This sequence belongs to the universal ribosomal protein uL3 family. As to quaternary structure, part of the 50S ribosomal subunit. Forms a cluster with proteins L14 and L19. Post-translationally, methylated by PrmB.

One of the primary rRNA binding proteins, it binds directly near the 3'-end of the 23S rRNA, where it nucleates assembly of the 50S subunit. This Actinobacillus pleuropneumoniae serotype 5b (strain L20) protein is Large ribosomal subunit protein uL3.